The following is a 252-amino-acid chain: Glycerol-3-phosphate regulon repressor (252 aa).

The HTH deoR-type domain maps to 3-58; that stretch reads QTQRHNGIIELVKQQGYVSTEELVEHFSVSPQTIRRDLNELAEQNLILRHHGGAAL. A DNA-binding region (H-T-H motif) is located at residues 20–39; it reads VSTEELVEHFSVSPQTIRRD.

Functionally, repressor of the glycerol-3-phosphate regulon. The protein is Glycerol-3-phosphate regulon repressor (glpR) of Escherichia coli (strain K12).